Here is a 509-residue protein sequence, read N- to C-terminus: tRNA-2-methylthio-N(6)-dimethylallyladenosine synthase (509 aa).

Over residues 1 to 15 (MNEQQRLASQQVNSS) the composition is skewed to polar residues. Positions 1-26 (MNEQQRLASQQVNSSTKKEEKDYSKY) are disordered. Positions 16–25 (TKKEEKDYSK) are enriched in basic and acidic residues. Residues 66 to 184 (RKFYIRTYGC…LPYILKDAMF (119 aa)) form the MTTase N-terminal domain. Residues Cys75, Cys111, Cys145, Cys221, Cys225, and Cys228 each contribute to the [4Fe-4S] cluster site. In terms of domain architecture, Radical SAM core spans 207 to 437 (RRGDIKAWVN…NALVNKLAIE (231 aa)). Residues 440-503 (DRYKGQIVEV…TWSLNGELVE (64 aa)) enclose the TRAM domain.

This sequence belongs to the methylthiotransferase family. MiaB subfamily. Monomer. [4Fe-4S] cluster is required as a cofactor.

It localises to the cytoplasm. The catalysed reaction is N(6)-dimethylallyladenosine(37) in tRNA + (sulfur carrier)-SH + AH2 + 2 S-adenosyl-L-methionine = 2-methylsulfanyl-N(6)-dimethylallyladenosine(37) in tRNA + (sulfur carrier)-H + 5'-deoxyadenosine + L-methionine + A + S-adenosyl-L-homocysteine + 2 H(+). Its function is as follows. Catalyzes the methylthiolation of N6-(dimethylallyl)adenosine (i(6)A), leading to the formation of 2-methylthio-N6-(dimethylallyl)adenosine (ms(2)i(6)A) at position 37 in tRNAs that read codons beginning with uridine. In Bacillus thuringiensis (strain Al Hakam), this protein is tRNA-2-methylthio-N(6)-dimethylallyladenosine synthase.